Here is a 392-residue protein sequence, read N- to C-terminus: Y' element ATP-dependent helicase YFL066C (392 aa).

In terms of domain architecture, Helicase ATP-binding spans 1–175 (MADTPSVAVQ…LQRIGLTGLA (175 aa)). An ATP-binding site is contributed by 11–18 (APPGYGKT). The region spanning 232-381 (KLLLALFEIE…EFYGLESKKG (150 aa)) is the Helicase C-terminal domain.

Belongs to the helicase family. Yeast subtelomeric Y' repeat subfamily.

In terms of biological role, catalyzes DNA unwinding and is involved in telomerase-independent telomere maintenance. The chain is Y' element ATP-dependent helicase YFL066C from Saccharomyces cerevisiae (strain ATCC 204508 / S288c) (Baker's yeast).